We begin with the raw amino-acid sequence, 277 residues long: SF-assemblin (277 aa).

Residues 1–20 (MATSGMVSPTSGRPFSPMRS) form a disordered region. A nonhelical region region spans residues 1–27 (MATSGMVSPTSGRPFSPMRSSVLTTTG). Residues 28–277 (SAIKLEHVSE…KMVNMQHNSA (250 aa)) form a rod region. Residues 70 to 90 (RLEKSMEAEVKRRAESDKQLQ) are a coiled coil.

The protein belongs to the SF-assemblin family. Post-translationally, the N-terminus is blocked.

The protein localises to the cytoplasm. Its subcellular location is the cytoskeleton. Functionally, major component of the striated microtubule-associated fibers (SMAFs; system-I-fibers). In Dunaliella bioculata (Green alga), this protein is SF-assemblin.